The chain runs to 230 residues: Ion-translocating oxidoreductase complex subunit E (230 aa).

Helical transmembrane passes span leucine 22 to glycine 42, threonine 63 to valine 83, leucine 86 to valine 106, tryptophan 125 to leucine 145, and proline 182 to valine 202.

Belongs to the NqrDE/RnfAE family. In terms of assembly, the complex is composed of six subunits: RsxA, RsxB, RsxC, RsxD, RsxE and RsxG.

The protein resides in the cell inner membrane. Functionally, part of a membrane-bound complex that couples electron transfer with translocation of ions across the membrane. Required to maintain the reduced state of SoxR. The protein is Ion-translocating oxidoreductase complex subunit E of Salmonella paratyphi A (strain ATCC 9150 / SARB42).